The primary structure comprises 763 residues: F-box protein SKP2 (763 aa).

The 47-residue stretch at 54–100 folds into the F-box domain; the sequence is KSSLMCLPTKVLLLILRTLDFNTLVTLCQVNSRFYNLITNEFLFQNV. A Phosphothreonine modification is found at T594.

In terms of assembly, interacts with SKP1. Component of the probable SCF(SKP2) complex containing CDC53, SKP1, RBX1 and SKP2. May interact with ribosomes.

It is found in the cytoplasm. Its pathway is protein modification; protein ubiquitination. Substrate recognition component of a SCF (SKP1-CUL1-F-box protein) E3 ubiquitin-protein ligase complex which mediates the ubiquitination and subsequent proteasomal degradation of target proteins. Probably recognizes and binds to phosphorylated target proteins. Regulates protein levels of sulfur metabolism enzymes. The SCF(SKP2) complex may regulate some transcription factors or regulators of cysteine and methionine biosynthesis. The polypeptide is F-box protein SKP2 (SKP2) (Saccharomyces cerevisiae (strain ATCC 204508 / S288c) (Baker's yeast)).